The following is a 1342-amino-acid chain: DNA-directed RNA polymerase subunit beta (1342 aa).

It belongs to the RNA polymerase beta chain family. As to quaternary structure, the RNAP catalytic core consists of 2 alpha, 1 beta, 1 beta' and 1 omega subunit. When a sigma factor is associated with the core the holoenzyme is formed, which can initiate transcription.

It catalyses the reaction RNA(n) + a ribonucleoside 5'-triphosphate = RNA(n+1) + diphosphate. Functionally, DNA-dependent RNA polymerase catalyzes the transcription of DNA into RNA using the four ribonucleoside triphosphates as substrates. The sequence is that of DNA-directed RNA polymerase subunit beta from Salmonella gallinarum (strain 287/91 / NCTC 13346).